Reading from the N-terminus, the 187-residue chain is NADH-quinone oxidoreductase subunit B (187 aa).

The segment covering 1–10 has biased composition (basic and acidic residues); it reads MTADHNRALH. A disordered region spans residues 1–22; that stretch reads MTADHNRALHDAPTARGGEVRQ. Residues cysteine 66, cysteine 67, cysteine 131, and cysteine 161 each contribute to the [4Fe-4S] cluster site.

Belongs to the complex I 20 kDa subunit family. As to quaternary structure, NDH-1 is composed of 14 different subunits. Subunits NuoB, C, D, E, F, and G constitute the peripheral sector of the complex. It depends on [4Fe-4S] cluster as a cofactor.

The protein resides in the cell inner membrane. The enzyme catalyses a quinone + NADH + 5 H(+)(in) = a quinol + NAD(+) + 4 H(+)(out). In terms of biological role, NDH-1 shuttles electrons from NADH, via FMN and iron-sulfur (Fe-S) centers, to quinones in the respiratory chain. Couples the redox reaction to proton translocation (for every two electrons transferred, four hydrogen ions are translocated across the cytoplasmic membrane), and thus conserves the redox energy in a proton gradient. The protein is NADH-quinone oxidoreductase subunit B of Erythrobacter litoralis (strain HTCC2594).